The following is a 657-amino-acid chain: Macrolide export ATP-binding/permease protein MacB (657 aa).

Residues 5–242 (LELLDVHRTY…RAVTGESAFD (238 aa)) form the ABC transporter domain. Residue 41–48 (GASGSGKS) participates in ATP binding. A run of 4 helical transmembrane segments spans residues 276-296 (FLSV…MALG), 538-558 (IAAI…LVSV), 596-616 (IGVF…GWAV), and 620-640 (LLSV…FGLW).

Belongs to the ABC transporter superfamily. Macrolide exporter (TC 3.A.1.122) family. As to quaternary structure, homodimer.

The protein resides in the cell inner membrane. Functionally, non-canonical ABC transporter that contains transmembrane domains (TMD), which form a pore in the inner membrane, and an ATP-binding domain (NBD), which is responsible for energy generation. Confers resistance against macrolides. This Chlorobium phaeobacteroides (strain DSM 266 / SMG 266 / 2430) protein is Macrolide export ATP-binding/permease protein MacB.